A 161-amino-acid polypeptide reads, in one-letter code: Transcription elongation factor GreB (161 aa).

Belongs to the GreA/GreB family. GreB subfamily.

Functionally, necessary for efficient RNA polymerase transcription elongation past template-encoded arresting sites. The arresting sites in DNA have the property of trapping a certain fraction of elongating RNA polymerases that pass through, resulting in locked ternary complexes. Cleavage of the nascent transcript by cleavage factors such as GreA or GreB allows the resumption of elongation from the new 3'terminus. GreB releases sequences of up to 9 nucleotides in length. This chain is Transcription elongation factor GreB, found in Vibrio cholerae serotype O1 (strain ATCC 39315 / El Tor Inaba N16961).